Here is a 322-residue protein sequence, read N- to C-terminus: Putative heme-binding peroxidase (322 aa).

The active-site Proton acceptor is the H38. H162 serves as a coordination point for heme b. The active-site Tryptophan radical intermediate is W178. The disordered stretch occupies residues 288-322; that stretch reads ISAPKKSNHPTGPAKGAQGGCPVAASQGGCPRAKL.

It belongs to the peroxidase family. Cytochrome c peroxidase subfamily. The cofactor is heme b.

Functionally, destroys radicals which are normally produced within the cells and which are toxic to biological systems. The sequence is that of Putative heme-binding peroxidase from Aspergillus fumigatus (strain ATCC MYA-4609 / CBS 101355 / FGSC A1100 / Af293) (Neosartorya fumigata).